The following is a 264-amino-acid chain: ATP synthase subunit a (264 aa).

Helical transmembrane passes span 32 to 52, 89 to 109, 134 to 154, 177 to 197, 208 to 228, and 235 to 255; these read IDSLFFSVGLGVLFLWLFHSV, VIAPLALTIFVWVFMMNFMDM, DLNITFSMAIGVFLLIIYYSI, IPVNFLLETVTLIAKPISLAL, LIFILIALMYGANWALSTLGV, and LIFHILVITLQAFIFMMLTIV.

The protein belongs to the ATPase A chain family. F-type ATPases have 2 components, CF(1) - the catalytic core - and CF(0) - the membrane proton channel. CF(1) has five subunits: alpha(3), beta(3), gamma(1), delta(1), epsilon(1). CF(0) has three main subunits: a(1), b(2) and c(9-12). The alpha and beta chains form an alternating ring which encloses part of the gamma chain. CF(1) is attached to CF(0) by a central stalk formed by the gamma and epsilon chains, while a peripheral stalk is formed by the delta and b chains.

The protein localises to the cell inner membrane. Its function is as follows. Key component of the proton channel; it plays a direct role in the translocation of protons across the membrane. This Shewanella piezotolerans (strain WP3 / JCM 13877) protein is ATP synthase subunit a.